A 241-amino-acid chain; its full sequence is Small ribosomal subunit protein eS4 (241 aa).

Residues 37–99 (IPLGLLLRDY…ADLYLRIVPD (63 aa)) enclose the S4 RNA-binding domain.

It belongs to the eukaryotic ribosomal protein eS4 family.

The chain is Small ribosomal subunit protein eS4 from Metallosphaera sedula (strain ATCC 51363 / DSM 5348 / JCM 9185 / NBRC 15509 / TH2).